A 159-amino-acid polypeptide reads, in one-letter code: Transcription antitermination protein NusB (159 aa).

Belongs to the NusB family.

Functionally, involved in transcription antitermination. Required for transcription of ribosomal RNA (rRNA) genes. Binds specifically to the boxA antiterminator sequence of the ribosomal RNA (rrn) operons. The protein is Transcription antitermination protein NusB of Stenotrophomonas maltophilia (strain K279a).